Here is a 357-residue protein sequence, read N- to C-terminus: DNA integrity scanning protein DisA (357 aa).

In terms of domain architecture, DAC spans 8 to 146 (VKSMINILQL…GNLRYTLKDI (139 aa)). Residues G75, L93, and 106 to 110 (MRHRT) contribute to the ATP site.

Belongs to the DisA family. As to quaternary structure, homooctamer. Requires Mg(2+) as cofactor.

The enzyme catalyses 2 ATP = 3',3'-c-di-AMP + 2 diphosphate. Participates in a DNA-damage check-point that is active prior to asymmetric division when DNA is damaged. DisA forms globular foci that rapidly scan along the chromosomes during sporulation, searching for lesions. When a lesion is present, DisA pauses at the lesion site. This triggers a cellular response that culminates in a temporary block in sporulation initiation. In terms of biological role, also has diadenylate cyclase activity, catalyzing the condensation of 2 ATP molecules into cyclic di-AMP (c-di-AMP). c-di-AMP acts as a signaling molecule that couples DNA integrity with progression of sporulation. The rise in c-di-AMP level generated by DisA while scanning the chromosome, operates as a positive signal that advances sporulation; upon encountering a lesion, the DisA focus arrests at the damaged site and halts c-di-AMP synthesis. The polypeptide is DNA integrity scanning protein DisA (Bacillus mycoides (strain KBAB4) (Bacillus weihenstephanensis)).